Here is a 126-residue protein sequence, read N- to C-terminus: Aspartate 1-decarboxylase (126 aa).

Ser25 functions as the Schiff-base intermediate with substrate; via pyruvic acid in the catalytic mechanism. At Ser25 the chain carries Pyruvic acid (Ser). Thr57 provides a ligand contact to substrate. Tyr58 serves as the catalytic Proton donor. 73 to 75 (GGA) contributes to the substrate binding site.

The protein belongs to the PanD family. In terms of assembly, heterooctamer of four alpha and four beta subunits. Pyruvate is required as a cofactor. Post-translationally, is synthesized initially as an inactive proenzyme, which is activated by self-cleavage at a specific serine bond to produce a beta-subunit with a hydroxyl group at its C-terminus and an alpha-subunit with a pyruvoyl group at its N-terminus.

It localises to the cytoplasm. The enzyme catalyses L-aspartate + H(+) = beta-alanine + CO2. Its pathway is cofactor biosynthesis; (R)-pantothenate biosynthesis; beta-alanine from L-aspartate: step 1/1. In terms of biological role, catalyzes the pyruvoyl-dependent decarboxylation of aspartate to produce beta-alanine. This Stenotrophomonas maltophilia (strain R551-3) protein is Aspartate 1-decarboxylase.